The chain runs to 148 residues: Deoxyuridine 5'-triphosphate nucleotidohydrolase (148 aa).

Residues 65-67 (RSG), N78, 82-84 (TID), and K92 each bind substrate.

It belongs to the dUTPase family. Mg(2+) serves as cofactor.

It catalyses the reaction dUTP + H2O = dUMP + diphosphate + H(+). The protein operates within pyrimidine metabolism; dUMP biosynthesis; dUMP from dCTP (dUTP route): step 2/2. This enzyme is involved in nucleotide metabolism: it produces dUMP, the immediate precursor of thymidine nucleotides and it decreases the intracellular concentration of dUTP so that uracil cannot be incorporated into DNA. This chain is Deoxyuridine 5'-triphosphate nucleotidohydrolase, found in Chlorobium luteolum (strain DSM 273 / BCRC 81028 / 2530) (Pelodictyon luteolum).